The sequence spans 661 residues: Hemocyanin C chain (661 aa).

A disulfide bridge connects residues C3 and C557. Residues H200, H204, H230, H350, H354, and H390 each coordinate Cu cation. N476 carries N-linked (GlcNAc...) asparagine glycosylation.

It belongs to the tyrosinase family. Hemocyanin subfamily. As to quaternary structure, hexamer of a number of different chains, of which A, B, and C have been identified. In terms of tissue distribution, hemolymph.

Its subcellular location is the secreted. It is found in the extracellular space. Hemocyanins are copper-containing oxygen carriers occurring freely dissolved in the hemolymph of many mollusks and arthropods. The protein is Hemocyanin C chain of Panulirus interruptus (California spiny lobster).